The following is a 382-amino-acid chain: Inactive ubiquitin-specific protease 5 (382 aa).

One can recognise a DUSP domain in the interval 16-141 (VPAEEERALI…GGPTLPRKAI (126 aa)). Residues 323 to 382 (TGLLNLGNTCFMNSAIQCLVHTPEFARYFREDYHREINWQNPLGMVVSTLSTSMALKPYV) enclose the USP domain.

It belongs to the peptidase C19 family. As to expression, widely expressed with the highest expression in floral organs.

It is found in the cell membrane. In terms of biological role, plays an important role in the development of floral organs and chloroplasts. Does not possess deubiquitinating enzyme activity in vitro. The polypeptide is Inactive ubiquitin-specific protease 5 (Oryza sativa subsp. japonica (Rice)).